We begin with the raw amino-acid sequence, 376 residues long: Succinate--CoA ligase [ADP-forming] subunit beta (376 aa).

In terms of domain architecture, ATP-grasp spans Lys-9–Asp-237. Residues Lys-46, Gly-53 to Gly-55, Val-95, and Glu-100 each bind ATP. 2 residues coordinate Mg(2+): Asn-192 and Asp-206. Residues Asn-257 and Gly-314–Thr-316 each bind substrate.

This sequence belongs to the succinate/malate CoA ligase beta subunit family. Heterotetramer of two alpha and two beta subunits. Requires Mg(2+) as cofactor.

It carries out the reaction succinate + ATP + CoA = succinyl-CoA + ADP + phosphate. The enzyme catalyses GTP + succinate + CoA = succinyl-CoA + GDP + phosphate. Its pathway is carbohydrate metabolism; tricarboxylic acid cycle; succinate from succinyl-CoA (ligase route): step 1/1. Functionally, succinyl-CoA synthetase functions in the citric acid cycle (TCA), coupling the hydrolysis of succinyl-CoA to the synthesis of either ATP or GTP and thus represents the only step of substrate-level phosphorylation in the TCA. The beta subunit provides nucleotide specificity of the enzyme and binds the substrate succinate, while the binding sites for coenzyme A and phosphate are found in the alpha subunit. In Bacteroides thetaiotaomicron (strain ATCC 29148 / DSM 2079 / JCM 5827 / CCUG 10774 / NCTC 10582 / VPI-5482 / E50), this protein is Succinate--CoA ligase [ADP-forming] subunit beta.